The sequence spans 366 residues: S-adenosylmethionine decarboxylase proenzyme 1 (366 aa).

Active-site residues include E9 and E12. E68 serves as a coordination point for substrate. Residue S69 is the Schiff-base intermediate with substrate; via pyruvic acid of the active site. S69 is subject to Pyruvic acid (Ser); by autocatalysis. Residue C83 is the Proton donor; for catalytic activity of the active site. Residues S233 and H246 each act as proton acceptor; for processing activity in the active site. E250 contributes to the substrate binding site.

The protein belongs to the eukaryotic AdoMetDC family. Pyruvate is required as a cofactor. In terms of processing, is synthesized initially as an inactive proenzyme. Formation of the active enzyme involves a self-maturation process in which the active site pyruvoyl group is generated from an internal serine residue via an autocatalytic post-translational modification. Two non-identical subunits are generated from the proenzyme in this reaction, and the pyruvate is formed at the N-terminus of the alpha chain, which is derived from the carboxyl end of the proenzyme. The post-translation cleavage follows an unusual pathway, termed non-hydrolytic serinolysis, in which the side chain hydroxyl group of the serine supplies its oxygen atom to form the C-terminus of the beta chain, while the remainder of the serine residue undergoes an oxidative deamination to produce ammonia and the pyruvoyl group blocking the N-terminus of the alpha chain.

It catalyses the reaction S-adenosyl-L-methionine + H(+) = S-adenosyl 3-(methylsulfanyl)propylamine + CO2. It participates in amine and polyamine biosynthesis; S-adenosylmethioninamine biosynthesis; S-adenosylmethioninamine from S-adenosyl-L-methionine: step 1/1. Functionally, essential for biosynthesis of the polyamines spermidine and spermine. Essential for polyamine homeostasis, and normal plant embryogenesis, growth and development. This chain is S-adenosylmethionine decarboxylase proenzyme 1, found in Arabidopsis thaliana (Mouse-ear cress).